Consider the following 283-residue polypeptide: Cyclin-C (283 aa).

The region spanning 46–144 is the Cyclin N-terminal domain; sequence NVIQALGEHL…ILECEFYLLE (99 aa). The interval 252–283 is disordered; it reads TILNKMPKPKPPPNSEGEQGTNGSQSSGYSQS. A compositionally biased stretch (polar residues) spans 267–283; that stretch reads EGEQGTNGSQSSGYSQS.

Belongs to the cyclin family. Cyclin C subfamily. As to quaternary structure, component of the Mediator complex. The cylin/CDK pair formed by ccnc/cdk8 also associates with the large subunit of RNA polymerase II.

The protein localises to the nucleus. Component of the Mediator complex, a coactivator involved in regulated gene transcription of nearly all RNA polymerase II-dependent genes. Mediator functions as a bridge to convey information from gene-specific regulatory proteins to the basal RNA polymerase II transcription machinery. Mediator is recruited to promoters by direct interactions with regulatory proteins and serves as a scaffold for the assembly of a functional preinitiation complex with RNA polymerase II and the general transcription factors. Binds to and activates cyclin-dependent kinase cdk8 that phosphorylates the CTD (C-terminal domain) of the large subunit of RNA polymerase II (RNAp II), which may inhibit the formation of a transcription initiation complex. This is Cyclin-C (ccnc) from Xenopus tropicalis (Western clawed frog).